Reading from the N-terminus, the 42-residue chain is MEGLTKFLSSAPVLIMALLTFTAGILIEFNRFYPDLLFHPLG.

A helical membrane pass occupies residues 7-27 (FLSSAPVLIMALLTFTAGILI).

Belongs to the PsaJ family.

Its subcellular location is the cellular thylakoid membrane. In terms of biological role, may help in the organization of the PsaE and PsaF subunits. In Microcystis aeruginosa (strain NIES-843 / IAM M-2473), this protein is Photosystem I reaction center subunit IX.